A 372-amino-acid polypeptide reads, in one-letter code: Fork head domain-containing protein FD4 (372 aa).

The fork-head DNA-binding region spans 12–103; sequence QKPPYSYISL…FDMFENGSLL (92 aa). Disordered stretches follow at residues 225 to 245 and 261 to 281; these read ESLITPDKPEHPSEDEDDEDD and PTTPAASEEYMSASRSSRTED.

In terms of tissue distribution, expressed in early embryogenesis in 14 symmetrical pairs of segmentally arranged neuroblasts. Also, later in embryogenesis, in a cluster of cells in head region.

It localises to the nucleus. Its function is as follows. Involved in development during embryogenesis. In Drosophila melanogaster (Fruit fly), this protein is Fork head domain-containing protein FD4 (fd96Ca).